The primary structure comprises 184 residues: Cell wall protein phiA (184 aa).

The first 21 residues, 1-21 (MQLKNLIFAAATAAALPATDA), serve as a signal peptide directing secretion. A glycan (N-linked (GlcNAc...) asparagine) is linked at Asn58.

It belongs to the phiA family.

It localises to the secreted. The protein resides in the cell wall. In terms of biological role, cell wall protein involved in development of asexual structures such as phialide and conidium development, and thus required for spore formation. Plays a role as a general stress protectant produced by the fungus in competition with antagonistic bacteria. The protein is Cell wall protein phiA of Aspergillus niger (strain ATCC MYA-4892 / CBS 513.88 / FGSC A1513).